A 193-amino-acid chain; its full sequence is Xanthine phosphoribosyltransferase (193 aa).

2 residues coordinate xanthine: Leu20 and Asn27. Ala127 to Ala131 provides a ligand contact to 5-phospho-alpha-D-ribose 1-diphosphate. Lys155 contacts xanthine.

It belongs to the purine/pyrimidine phosphoribosyltransferase family. Xpt subfamily. Homodimer.

It localises to the cytoplasm. It catalyses the reaction XMP + diphosphate = xanthine + 5-phospho-alpha-D-ribose 1-diphosphate. Its pathway is purine metabolism; XMP biosynthesis via salvage pathway; XMP from xanthine: step 1/1. In terms of biological role, converts the preformed base xanthine, a product of nucleic acid breakdown, to xanthosine 5'-monophosphate (XMP), so it can be reused for RNA or DNA synthesis. The protein is Xanthine phosphoribosyltransferase of Porphyromonas gingivalis (strain ATCC BAA-308 / W83).